An 88-amino-acid polypeptide reads, in one-letter code: Sec-independent protein translocase protein TatA (88 aa).

A helical transmembrane segment spans residues leucine 4–glycine 24. Residues alanine 45–proline 88 form a disordered region. A compositionally biased stretch (low complexity) spans serine 75–proline 88.

Belongs to the TatA/E family. As to quaternary structure, the Tat system comprises two distinct complexes: a TatABC complex, containing multiple copies of TatA, TatB and TatC subunits, and a separate TatA complex, containing only TatA subunits. Substrates initially bind to the TatABC complex, which probably triggers association of the separate TatA complex to form the active translocon.

Its subcellular location is the cell inner membrane. Its function is as follows. Part of the twin-arginine translocation (Tat) system that transports large folded proteins containing a characteristic twin-arginine motif in their signal peptide across membranes. TatA could form the protein-conducting channel of the Tat system. The protein is Sec-independent protein translocase protein TatA of Gluconacetobacter diazotrophicus (strain ATCC 49037 / DSM 5601 / CCUG 37298 / CIP 103539 / LMG 7603 / PAl5).